The primary structure comprises 509 residues: Glycerol kinase (509 aa).

Position 12 (Thr-12) interacts with ADP. ATP-binding residues include Thr-12, Thr-13, and Ser-14. Sn-glycerol 3-phosphate is bound at residue Thr-12. ADP is bound at residue Arg-16. Arg-82, Glu-83, Tyr-134, and Asp-245 together coordinate sn-glycerol 3-phosphate. Positions 82, 83, 134, 245, and 246 each coordinate glycerol. Residues Thr-267 and Gly-311 each contribute to the ADP site. The ATP site is built by Thr-267, Gly-311, Gln-315, and Gly-412. Residues Gly-412 and Asn-416 each contribute to the ADP site.

This sequence belongs to the FGGY kinase family.

The enzyme catalyses glycerol + ATP = sn-glycerol 3-phosphate + ADP + H(+). It functions in the pathway polyol metabolism; glycerol degradation via glycerol kinase pathway; sn-glycerol 3-phosphate from glycerol: step 1/1. Inhibited by fructose 1,6-bisphosphate (FBP). Its function is as follows. Key enzyme in the regulation of glycerol uptake and metabolism. Catalyzes the phosphorylation of glycerol to yield sn-glycerol 3-phosphate. The protein is Glycerol kinase of Rhizorhabdus wittichii (strain DSM 6014 / CCUG 31198 / JCM 15750 / NBRC 105917 / EY 4224 / RW1) (Sphingomonas wittichii).